The sequence spans 203 residues: Urease accessory protein UreG (203 aa).

11 to 18 (GPVGSGKT) contacts GTP.

It belongs to the SIMIBI class G3E GTPase family. UreG subfamily. Homodimer. UreD, UreF and UreG form a complex that acts as a GTP-hydrolysis-dependent molecular chaperone, activating the urease apoprotein by helping to assemble the nickel containing metallocenter of UreC. The UreE protein probably delivers the nickel.

The protein localises to the cytoplasm. Functionally, facilitates the functional incorporation of the urease nickel metallocenter. This process requires GTP hydrolysis, probably effectuated by UreG. The chain is Urease accessory protein UreG from Prochlorococcus marinus (strain MIT 9301).